Reading from the N-terminus, the 160-residue chain is Class B acid phosphatase (160 aa).

Positions 1-23 (MRKVTLTLSAIALALSLNGAAMA) are cleaved as a signal peptide. Asp69 (nucleophile) is an active-site residue. Residues Asp69 and Asp71 each coordinate Mg(2+). Asp71 serves as the catalytic Proton donor. Residue 137–138 (TG) coordinates substrate.

This sequence belongs to the class B bacterial acid phosphatase family. Homotetramer. It depends on Mg(2+) as a cofactor.

It is found in the periplasm. It catalyses the reaction a phosphate monoester + H2O = an alcohol + phosphate. Functionally, dephosphorylates several organic phosphate monoesters. Also has a phosphotransferase activity catalyzing the transfer of low-energy phosphate groups from organic phosphate monoesters to free hydroxyl groups of various organic compounds. This Proteus mirabilis protein is Class B acid phosphatase (aphA).